Reading from the N-terminus, the 494-residue chain is Ceramide glucosyltransferase (494 aa).

The Lumenal portion of the chain corresponds to 1-6 (MPLLMD). Residues 7–27 (GLAYAGAIWSLIVFCVQAIGL) form a helical membrane-spanning segment. Residues 28–337 (YQLFRSYSRP…VRWLRVRKWT (310 aa)) are Cytoplasmic-facing. A short sequence motif (D1) is located at residue Asp-95. Asp-160 is a short sequence motif (D2). Asp-285 is a short sequence motif (D3). Asp-285 (proton acceptor) is an active-site residue. Residues 326-330 (RRVRW) carry the (Q/R)XXRW motif. A helical transmembrane segment spans residues 338–358 (VLLATLVEPGVESMVCCMAFA). At 359–380 (HALTTTPWCPNPADWPIPHTWT) the chain is on the lumenal side. A helical transmembrane segment spans residues 381–401 (ALWSIWLAAIAVWATLDYVVY). Over 402-428 (HFLHSCRSIEKDADSPDFAQGNELMKR) the chain is Cytoplasmic. A helical transmembrane segment spans residues 429 to 449 (PFGAWILAWIGREILALPIWT). Residues 450 to 494 (RAVLLGTTVTWRGTKFKVRPDQSVVDIPNAGAKSNGIGSTNRKVR) are Lumenal-facing.

This sequence belongs to the glycosyltransferase 2 family.

It localises to the golgi apparatus membrane. It carries out the reaction an N-acylsphing-4-enine + UDP-alpha-D-glucose = a beta-D-glucosyl-(1&lt;-&gt;1')-N-acylsphing-4-enine + UDP + H(+). It participates in lipid metabolism; sphingolipid metabolism. Its function is as follows. Catalyzes the final step in the biosynthesis of the membrane lipid glucosylceramide (GluCer), the transfer of glucose to ceramide. Glucosylceramides play important roles in growth, differentiation and pathogenicity. The polypeptide is Ceramide glucosyltransferase (Pyricularia oryzae (strain 70-15 / ATCC MYA-4617 / FGSC 8958) (Rice blast fungus)).